Reading from the N-terminus, the 117-residue chain is Large ribosomal subunit protein uL18 (117 aa).

This sequence belongs to the universal ribosomal protein uL18 family. As to quaternary structure, part of the 50S ribosomal subunit; part of the 5S rRNA/L5/L18/L25 subcomplex. Contacts the 5S and 23S rRNAs.

Its function is as follows. This is one of the proteins that bind and probably mediate the attachment of the 5S RNA into the large ribosomal subunit, where it forms part of the central protuberance. The polypeptide is Large ribosomal subunit protein uL18 (Aliivibrio salmonicida (strain LFI1238) (Vibrio salmonicida (strain LFI1238))).